A 307-amino-acid polypeptide reads, in one-letter code: Ribonuclease Z (307 aa).

The Zn(2+) site is built by His-63, His-65, Asp-67, His-68, His-143, Asp-213, and His-271. Asp-67 functions as the Proton acceptor in the catalytic mechanism.

Belongs to the RNase Z family. Homodimer. It depends on Zn(2+) as a cofactor.

It carries out the reaction Endonucleolytic cleavage of RNA, removing extra 3' nucleotides from tRNA precursor, generating 3' termini of tRNAs. A 3'-hydroxy group is left at the tRNA terminus and a 5'-phosphoryl group is left at the trailer molecule.. Its function is as follows. Zinc phosphodiesterase, which displays some tRNA 3'-processing endonuclease activity. Probably involved in tRNA maturation, by removing a 3'-trailer from precursor tRNA. This Lactococcus lactis subsp. cremoris (strain SK11) protein is Ribonuclease Z.